A 129-amino-acid polypeptide reads, in one-letter code: Small ribosomal subunit protein uS9 (129 aa).

It belongs to the universal ribosomal protein uS9 family.

In Chlorobium phaeobacteroides (strain DSM 266 / SMG 266 / 2430), this protein is Small ribosomal subunit protein uS9.